The primary structure comprises 339 residues: Anthranilate phosphoribosyltransferase (339 aa).

5-phospho-alpha-D-ribose 1-diphosphate is bound by residues Gly80, 83–84, Thr88, 90–93, 108–116, and Ser120; these read GD, NIST, and KHGNRSVSS. Gly80 serves as a coordination point for anthranilate. Residue Ser92 participates in Mg(2+) binding. Asn111 lines the anthranilate pocket. Arg166 is an anthranilate binding site. Asp225 and Glu226 together coordinate Mg(2+).

This sequence belongs to the anthranilate phosphoribosyltransferase family. In terms of assembly, homodimer. Mg(2+) is required as a cofactor.

It carries out the reaction N-(5-phospho-beta-D-ribosyl)anthranilate + diphosphate = 5-phospho-alpha-D-ribose 1-diphosphate + anthranilate. It functions in the pathway amino-acid biosynthesis; L-tryptophan biosynthesis; L-tryptophan from chorismate: step 2/5. Catalyzes the transfer of the phosphoribosyl group of 5-phosphorylribose-1-pyrophosphate (PRPP) to anthranilate to yield N-(5'-phosphoribosyl)-anthranilate (PRA). This is Anthranilate phosphoribosyltransferase from Desulfosudis oleivorans (strain DSM 6200 / JCM 39069 / Hxd3) (Desulfococcus oleovorans).